A 505-amino-acid chain; its full sequence is Histidine ammonia-lyase (505 aa).

Positions 141–143 (ASG) form a cross-link, 5-imidazolinone (Ala-Gly). Ser142 carries the post-translational modification 2,3-didehydroalanine (Ser).

This sequence belongs to the PAL/histidase family. In terms of processing, contains an active site 4-methylidene-imidazol-5-one (MIO), which is formed autocatalytically by cyclization and dehydration of residues Ala-Ser-Gly.

The protein localises to the cytoplasm. The catalysed reaction is L-histidine = trans-urocanate + NH4(+). Its pathway is amino-acid degradation; L-histidine degradation into L-glutamate; N-formimidoyl-L-glutamate from L-histidine: step 1/3. The sequence is that of Histidine ammonia-lyase from Bacillus thuringiensis (strain Al Hakam).